We begin with the raw amino-acid sequence, 366 residues long: Histidinol-phosphate aminotransferase (366 aa).

An N6-(pyridoxal phosphate)lysine modification is found at Lys-228.

This sequence belongs to the class-II pyridoxal-phosphate-dependent aminotransferase family. Histidinol-phosphate aminotransferase subfamily. Homodimer. Pyridoxal 5'-phosphate serves as cofactor.

The enzyme catalyses L-histidinol phosphate + 2-oxoglutarate = 3-(imidazol-4-yl)-2-oxopropyl phosphate + L-glutamate. It functions in the pathway amino-acid biosynthesis; L-histidine biosynthesis; L-histidine from 5-phospho-alpha-D-ribose 1-diphosphate: step 7/9. This chain is Histidinol-phosphate aminotransferase, found in Corynebacterium glutamicum (strain ATCC 13032 / DSM 20300 / JCM 1318 / BCRC 11384 / CCUG 27702 / LMG 3730 / NBRC 12168 / NCIMB 10025 / NRRL B-2784 / 534).